A 94-amino-acid chain; its full sequence is NADH dehydrogenase [ubiquinone] iron-sulfur protein 3, mitochondrial (94 aa).

It belongs to the complex I 30 kDa subunit family. As to quaternary structure, core subunit of respiratory chain NADH dehydrogenase (Complex I) which is composed of 45 different subunits. Interacts with NDUFAF3. Interacts with RAB5IF. Found in subcomplexes containing subunits NDUFS2, MT-ND1 and NDUFA13.

The protein localises to the mitochondrion inner membrane. It carries out the reaction a ubiquinone + NADH + 5 H(+)(in) = a ubiquinol + NAD(+) + 4 H(+)(out). In terms of biological role, core subunit of the mitochondrial membrane respiratory chain NADH dehydrogenase (Complex I) which catalyzes electron transfer from NADH through the respiratory chain, using ubiquinone as an electron acceptor. Essential for the catalytic activity and assembly of complex I. This is NADH dehydrogenase [ubiquinone] iron-sulfur protein 3, mitochondrial from Mesocricetus auratus (Golden hamster).